A 226-amino-acid polypeptide reads, in one-letter code: Leucyl/phenylalanyl-tRNA--protein transferase (226 aa).

It belongs to the L/F-transferase family.

The protein localises to the cytoplasm. It carries out the reaction N-terminal L-lysyl-[protein] + L-leucyl-tRNA(Leu) = N-terminal L-leucyl-L-lysyl-[protein] + tRNA(Leu) + H(+). The catalysed reaction is N-terminal L-arginyl-[protein] + L-leucyl-tRNA(Leu) = N-terminal L-leucyl-L-arginyl-[protein] + tRNA(Leu) + H(+). It catalyses the reaction L-phenylalanyl-tRNA(Phe) + an N-terminal L-alpha-aminoacyl-[protein] = an N-terminal L-phenylalanyl-L-alpha-aminoacyl-[protein] + tRNA(Phe). Its function is as follows. Functions in the N-end rule pathway of protein degradation where it conjugates Leu, Phe and, less efficiently, Met from aminoacyl-tRNAs to the N-termini of proteins containing an N-terminal arginine or lysine. The protein is Leucyl/phenylalanyl-tRNA--protein transferase of Stutzerimonas stutzeri (strain A1501) (Pseudomonas stutzeri).